Consider the following 556-residue polypeptide: Glutamine--tRNA ligase (556 aa).

The 'HIGH' region signature appears at 34-44 (PEPNGYLHIGH). Residues 35 to 37 (EPN) and 41 to 47 (HIGHAKS) contribute to the ATP site. 2 residues coordinate L-glutamine: Asp67 and Tyr212. ATP-binding positions include Thr231, 261–262 (RL), and 269–271 (MSK). The 'KMSKS' region signature appears at 268 to 272 (VMSKR).

It belongs to the class-I aminoacyl-tRNA synthetase family. As to quaternary structure, monomer.

It is found in the cytoplasm. The catalysed reaction is tRNA(Gln) + L-glutamine + ATP = L-glutaminyl-tRNA(Gln) + AMP + diphosphate. In Vibrio parahaemolyticus serotype O3:K6 (strain RIMD 2210633), this protein is Glutamine--tRNA ligase.